The chain runs to 339 residues: Casein kinase II subunit alpha' (339 aa).

The region spanning 50-334 is the Protein kinase domain; that stretch reads YEIINKIGRG…AKEAMDHKFF (285 aa). ATP is bound by residues 56 to 64 and Lys-79; that span reads IGRGKYSEV. Asp-167 serves as the catalytic Proton acceptor.

It belongs to the protein kinase superfamily. Ser/Thr protein kinase family. CK2 subfamily. In terms of assembly, tetramer composed of an alpha chain, an alpha', one beta chain and one beta' chain. Interacts with FACT subunits POB3 and SPT16. Interacts with NAP1. Interacts with YTA7.

It catalyses the reaction L-seryl-[protein] + ATP = O-phospho-L-seryl-[protein] + ADP + H(+). The catalysed reaction is L-threonyl-[protein] + ATP = O-phospho-L-threonyl-[protein] + ADP + H(+). Catalytic subunit of a constitutively active serine/threonine-protein kinase complex that phosphorylates a large number of substrates containing acidic residues C-terminal to the phosphorylated serine or threonine. Phosphorylates YTA7 during S-phase to promote transcription of histones. The chain is Casein kinase II subunit alpha' from Saccharomyces cerevisiae (strain ATCC 204508 / S288c) (Baker's yeast).